An 868-amino-acid polypeptide reads, in one-letter code: DNA mismatch repair protein MutS (868 aa).

Residue 621–628 (GPNMGGKS) coordinates ATP. The segment at 803–852 (LESGDGGDTGSAQLPLFGPEPVFPPPAQPEPEPDPIREAVENLDPDGLTP) is disordered. Positions 823–832 (PVFPPPAQPE) are enriched in pro residues.

This sequence belongs to the DNA mismatch repair MutS family.

Its function is as follows. This protein is involved in the repair of mismatches in DNA. It is possible that it carries out the mismatch recognition step. This protein has a weak ATPase activity. The protein is DNA mismatch repair protein MutS of Halorhodospira halophila (strain DSM 244 / SL1) (Ectothiorhodospira halophila (strain DSM 244 / SL1)).